The chain runs to 787 residues: Transcription factor SOX-6 (787 aa).

The tract at residues 1–46 (MSSKQATSPFACAADGEDAMTQDLTSREKEEGSDQHVASHLPLHPI) is disordered. Basic and acidic residues predominate over residues 25-34 (TSREKEEGSD). Threonine 119 carries the phosphothreonine modification. The stretch at 184–262 (LAEKERQLST…LLQQQIQVQG (79 aa)) forms a coiled coil. The disordered stretch occupies residues 340–429 (PGAKMPSTPQ…KSSIPSPIGG (90 aa)). Positions 352–361 (NTAGTVSPTG) are enriched in polar residues. Position 358 is a phosphoserine (serine 358). Threonine 360 carries the post-translational modification Phosphothreonine. Residues lysine 363 and lysine 376 each participate in a glycyl lysine isopeptide (Lys-Gly) (interchain with G-Cter in SUMO) cross-link. Phosphoserine is present on residues serine 398 and serine 401. The span at 398-420 (SPTSPTQNLFPASKTSPVNLPNK) shows a compositional bias: polar residues. Positions 580 to 648 (IKRPMNAFMV…IHLEKYPNYK (69 aa)) form a DNA-binding region, HMG box. Over residues 712-740 (TPSPQMTSDCSSTSASPEPSLPVIQSTYG) the composition is skewed to polar residues. The tract at residues 712–787 (TPSPQMTSDC…NEAPEAVSAN (76 aa)) is disordered. Positions 755-768 (NGEDEMEMYDDYED) are enriched in acidic residues.

In terms of assembly, homodimer. Interacts with DAZAP2. May interact with CENPK. Post-translationally, sumoylation inhibits the transcriptional activity.

Its subcellular location is the nucleus. The protein localises to the cytoplasm. Transcription factor that plays a key role in several developmental processes, including neurogenesis, chondrocytes differentiation and cartilage formation. Specifically binds the 5'-AACAAT-3' DNA motif present in enhancers and super-enhancers and promotes expression of genes important for chondrogenesis. Required for overt chondrogenesis when condensed prechondrocytes differentiate into early stage chondrocytes: SOX5 and SOX6 cooperatively bind with SOX9 on active enhancers and super-enhancers associated with cartilage-specific genes, and thereby potentiate SOX9's ability to transactivate. Not involved in precartilaginous condensation, the first step in chondrogenesis, during which skeletal progenitors differentiate into prechondrocytes. Together with SOX5, required to form and maintain a pool of highly proliferating chondroblasts between epiphyses and metaphyses, to form columnar chondroblasts, delay chondrocyte prehypertrophy but promote hypertrophy, and to delay terminal differentiation of chondrocytes on contact with ossification fronts. Binds to the proximal promoter region of the myelin protein MPZ gene, and is thereby involved in the differentiation of oligodendroglia in the developing spinal tube. Binds to the gene promoter of MBP and acts as a transcriptional repressor. The polypeptide is Transcription factor SOX-6 (Pongo abelii (Sumatran orangutan)).